The following is a 614-amino-acid chain: Interleukin-18 receptor accessory protein (614 aa).

A signal peptide spans Met-1 to Gly-19. Residues Phe-20–Glu-356 lie on the Extracellular side of the membrane. Asn-21 carries N-linked (GlcNAc...) asparagine glycosylation. The cysteines at positions 46 and 126 are disulfide-linked. A disordered region spans residues Ala-59–Lys-78. Ig-like C2-type domains lie at Pro-148–Arg-234 and Pro-250–Arg-352. A glycan (N-linked (GlcNAc...) asparagine) is linked at Asn-151. 3 disulfide bridges follow: Cys-154-Cys-179, Cys-174-Cys-220, and Cys-179-Cys-220. Asn-227 carries an N-linked (GlcNAc...) asparagine glycan. A disulfide bond links Cys-272 and Cys-336. An N-linked (GlcNAc...) asparagine glycan is attached at Asn-344. Residues Val-357–Ala-377 traverse the membrane as a helical segment. At Ala-378–Cys-614 the chain is on the cytoplasmic side. Residues Lys-405–Met-558 form the TIR domain. The active site involves Glu-492.

This sequence belongs to the interleukin-1 receptor family. As to quaternary structure, forms a ternary complex with IL18 and IL18R1. Within this complex, IL18R1 is involved in ligand-binding and IL18RAP in signaling leading to NF-kappa-B and JNK activation.

The protein localises to the cell membrane. The enzyme catalyses NAD(+) + H2O = ADP-D-ribose + nicotinamide + H(+). Its function is as follows. Within the IL18 receptor complex, does not mediate IL18-binding, but involved in IL18-dependent signal transduction, leading to NF-kappa-B and JNK activation. May play a role in IL18-mediated IFNG synthesis from T-helper 1 (Th1) cells. The sequence is that of Interleukin-18 receptor accessory protein from Mus musculus (Mouse).